The following is a 125-amino-acid chain: Small ribosomal subunit protein uS13 (125 aa).

Positions 90-125 are disordered; the sequence is TRHRRGLPVRGQRTHTNARTKKGPRRAIAGKKKVTK.

It belongs to the universal ribosomal protein uS13 family. In terms of assembly, part of the 30S ribosomal subunit. Forms a loose heterodimer with protein S19. Forms two bridges to the 50S subunit in the 70S ribosome.

Functionally, located at the top of the head of the 30S subunit, it contacts several helices of the 16S rRNA. In the 70S ribosome it contacts the 23S rRNA (bridge B1a) and protein L5 of the 50S subunit (bridge B1b), connecting the 2 subunits; these bridges are implicated in subunit movement. Contacts the tRNAs in the A and P-sites. This is Small ribosomal subunit protein uS13 from Gemmatimonas aurantiaca (strain DSM 14586 / JCM 11422 / NBRC 100505 / T-27).